The following is a 327-amino-acid chain: Cytochrome c oxidase subunit 2 (327 aa).

The signal sequence occupies residues 1–23 (MEQIPASIWTLTAGVVVTLISFW). Helical transmembrane passes span 56 to 78 (LFLV…AGEE) and 96 to 114 (AIPA…DIFQ). Cu cation-binding residues include His221, Cys255, Cys259, and His263.

Belongs to the cytochrome c oxidase subunit 2 family. Cu cation is required as a cofactor.

It is found in the cell membrane. It catalyses the reaction 4 Fe(II)-[cytochrome c] + O2 + 8 H(+)(in) = 4 Fe(III)-[cytochrome c] + 2 H2O + 4 H(+)(out). Functionally, subunits I and II form the functional core of the enzyme complex. Electrons originating in cytochrome c are transferred via heme a and Cu(A) to the binuclear center formed by heme a3 and Cu(B). The polypeptide is Cytochrome c oxidase subunit 2 (ctaC) (Thermostichus vulcanus (Synechococcus vulcanus)).